The following is a 118-amino-acid chain: Large ribosomal subunit protein bL19 (118 aa).

The protein belongs to the bacterial ribosomal protein bL19 family.

Its function is as follows. This protein is located at the 30S-50S ribosomal subunit interface and may play a role in the structure and function of the aminoacyl-tRNA binding site. The polypeptide is Large ribosomal subunit protein bL19 (Ligilactobacillus salivarius (strain UCC118) (Lactobacillus salivarius)).